The following is a 129-amino-acid chain: Aldose 1-epimerase (129 aa).

The protein belongs to the aldose epimerase family.

The enzyme catalyses alpha-D-glucose = beta-D-glucose. It participates in carbohydrate metabolism; hexose metabolism. In terms of biological role, mutarotase converts alpha-aldose to the beta-anomer. It is active on D-glucose, L-arabinose, D-xylose, D-galactose, maltose and lactose. This chain is Aldose 1-epimerase (galM), found in Lactobacillus helveticus (Lactobacillus suntoryeus).